The sequence spans 361 residues: Cysteine-rich with EGF-like domain protein 2-A (361 aa).

Residues 1–24 form the signal peptide; sequence MNGSRALHLSAWLLLCLLCSAAVA. Positions 134-176 constitute an EGF-like 1 domain; sequence DCLACLGGSERPCHGNGFCNGDGTRSGDGLCRCEAEYTGPFCL. 3 disulfide bridges follow: Cys138–Cys152, Cys146–Cys164, and Cys166–Cys175. A glycan (N-linked (GlcNAc...) asparagine) is linked at Asn188. FU repeat units lie at residues 191–238 and 251–298; these read YSLC…EESP and SFLC…SEQV. An EGF-like 2; calcium-binding domain is found at 288–329; that stretch reads DVDECDASEQVCSRENETCLNTAGSYKCTCSEGFEDKEGNCV. Intrachain disulfides connect Cys292–Cys306, Cys299–Cys315, and Cys317–Cys328. A glycan (N-linked (GlcNAc...) asparagine) is linked at Asn303. A disordered region spans residues 341-361; that stretch reads DGEMGTSASDINISNTAHEDL. A compositionally biased stretch (polar residues) spans 346–361; the sequence is TSASDINISNTAHEDL. An N-linked (GlcNAc...) asparagine glycan is attached at Asn352.

This sequence belongs to the CRELD family.

It is found in the secreted. Its subcellular location is the endoplasmic reticulum. Functionally, possible role in neuronal acetylcholine receptor transport. This chain is Cysteine-rich with EGF-like domain protein 2-A (creld2-a), found in Xenopus laevis (African clawed frog).